Reading from the N-terminus, the 95-residue chain is Aspartyl/glutamyl-tRNA(Asn/Gln) amidotransferase subunit C (95 aa).

This sequence belongs to the GatC family. Heterotrimer of A, B and C subunits.

It carries out the reaction L-glutamyl-tRNA(Gln) + L-glutamine + ATP + H2O = L-glutaminyl-tRNA(Gln) + L-glutamate + ADP + phosphate + H(+). The catalysed reaction is L-aspartyl-tRNA(Asn) + L-glutamine + ATP + H2O = L-asparaginyl-tRNA(Asn) + L-glutamate + ADP + phosphate + 2 H(+). Its function is as follows. Allows the formation of correctly charged Asn-tRNA(Asn) or Gln-tRNA(Gln) through the transamidation of misacylated Asp-tRNA(Asn) or Glu-tRNA(Gln) in organisms which lack either or both of asparaginyl-tRNA or glutaminyl-tRNA synthetases. The reaction takes place in the presence of glutamine and ATP through an activated phospho-Asp-tRNA(Asn) or phospho-Glu-tRNA(Gln). In Bradyrhizobium sp. (strain ORS 278), this protein is Aspartyl/glutamyl-tRNA(Asn/Gln) amidotransferase subunit C.